The following is a 346-amino-acid chain: MIRKYLIYISLLFIVFEVYSKPAFISQDDSYELDFSSGEVDISVNTNSKFNLSFKDESWIYIKSIENEAFIKLIGESYDNGAVFTFQTFKKEGKIKLVFTYQNVKDSSEFNKIIILKITKNFEVAIPQGVGGGSSRDNNIETGNNLELGGGSISGATSKEIIVRALNLSYINDYKGAIDLLNKYNFNDDKYILLKAEIHYKNGDYLKSYENYLKLKSKYFQSIVFDLIRLAIELNIKEEVLENARYLVEKNVDFSESIYLEIFEFLVTRGEHEFALNFSSLYFPKYINSSFSDKYSYLLGKLYESESKHKDFLKALHYYKLVIDNYPFSYYYERAKIRYLFLKRFF.

This is an uncharacterized protein from Borreliella burgdorferi (strain ATCC 35210 / DSM 4680 / CIP 102532 / B31) (Borrelia burgdorferi).